The following is a 713-amino-acid chain: Acetyl-coenzyme A synthetase 1 (713 aa).

The disordered stretch occupies residues methionine 1–glutamate 39. Residues lysine 10–lysine 22 show a composition bias toward basic and acidic residues. Residues arginine 248–lysine 251 and threonine 367 each bind CoA. ATP is bound by residues glycine 443–proline 445, aspartate 467–threonine 472, aspartate 559, and arginine 574. Residues proline 552 to isoleucine 600 carry the FACS motif. A CoA-binding site is contributed by serine 582. Position 585 (arginine 585) interacts with ATP. A CoA-binding site is contributed by arginine 650. Residues valine 711–leucine 713 carry the Microbody targeting signal motif.

The protein belongs to the ATP-dependent AMP-binding enzyme family.

The protein resides in the microsome. It localises to the cytoplasm. It is found in the mitochondrion. Its subcellular location is the nucleus. The catalysed reaction is acetate + ATP + CoA = acetyl-CoA + AMP + diphosphate. Its function is as follows. Catalyzes the production of acetyl-CoA. Provides the acetyl-CoA source for histone acetylation in the nucleus. 'Aerobic' isozyme of acetyl-coenzyme A synthetase, which supports growth on nonfermentable carbon sources such as glycerol and ethanol. May be required for assimilation of ethanol and acetate. In Saccharomyces cerevisiae (strain ATCC 204508 / S288c) (Baker's yeast), this protein is Acetyl-coenzyme A synthetase 1 (ACS1).